The following is a 380-amino-acid chain: Cystathionine beta-lyase (380 aa).

Lys196 is modified (N6-(pyridoxal phosphate)lysine).

This sequence belongs to the trans-sulfuration enzymes family. Pyridoxal 5'-phosphate is required as a cofactor.

The protein resides in the cytoplasm. It carries out the reaction L,L-cystathionine + H2O = L-homocysteine + pyruvate + NH4(+). The enzyme catalyses an S-substituted L-cysteine + H2O = a thiol + pyruvate + NH4(+). It functions in the pathway amino-acid biosynthesis; L-methionine biosynthesis via de novo pathway; L-homocysteine from L-cystathionine: step 1/1. Functionally, the enzymatic degradation of amino acids in cheese is believed to generate aroma compounds and therefore to be essential for flavor development. Cystathionine beta-lyase (CBL) can convert cystathionine to homocysteine but is also able to catalyze an alpha, gamma elimination. With methionine as a substrate, it produces volatile sulfur compounds which are important for flavor formation in Gouda cheese. The polypeptide is Cystathionine beta-lyase (metC) (Lactococcus lactis subsp. lactis (strain IL1403) (Streptococcus lactis)).